The sequence spans 436 residues: Trigger factor (436 aa).

A PPIase FKBP-type domain is found at 161–246 (DLRVNMDFVG…LNKVEKQDLP (86 aa)).

It belongs to the FKBP-type PPIase family. Tig subfamily.

It localises to the cytoplasm. It catalyses the reaction [protein]-peptidylproline (omega=180) = [protein]-peptidylproline (omega=0). Involved in protein export. Acts as a chaperone by maintaining the newly synthesized protein in an open conformation. Functions as a peptidyl-prolyl cis-trans isomerase. The sequence is that of Trigger factor from Tolumonas auensis (strain DSM 9187 / NBRC 110442 / TA 4).